The sequence spans 508 residues: D-alanine--D-alanyl carrier protein ligase (508 aa).

Residue 152-153 coordinates ATP; the sequence is TS. A D-alanine-binding site is contributed by Asp-198. 293–298 contacts ATP; it reads NTYGPT. Val-302 provides a ligand contact to D-alanine. Residues Asp-384, 396-399, and Lys-495 contribute to the ATP site; that span reads YRGR. Lys-495 is a binding site for D-alanine.

This sequence belongs to the ATP-dependent AMP-binding enzyme family. DltA subfamily.

The protein localises to the cytoplasm. The catalysed reaction is holo-[D-alanyl-carrier protein] + D-alanine + ATP = D-alanyl-[D-alanyl-carrier protein] + AMP + diphosphate. The protein operates within cell wall biogenesis; lipoteichoic acid biosynthesis. Its function is as follows. Catalyzes the first step in the D-alanylation of lipoteichoic acid (LTA), the activation of D-alanine and its transfer onto the D-alanyl carrier protein (Dcp) DltC. In an ATP-dependent two-step reaction, forms a high energy D-alanyl-AMP intermediate, followed by transfer of the D-alanyl residue as a thiol ester to the phosphopantheinyl prosthetic group of the Dcp. D-alanylation of LTA plays an important role in modulating the properties of the cell wall in Gram-positive bacteria, influencing the net charge of the cell wall. This Lactiplantibacillus plantarum (strain ATCC BAA-793 / NCIMB 8826 / WCFS1) (Lactobacillus plantarum) protein is D-alanine--D-alanyl carrier protein ligase.